Reading from the N-terminus, the 677-residue chain is MQLSSLSHTSITHKDKKKKMGIELQNHQSHHEEASPAEEPMSRWLINTPEPPSMWQELIGYIRTNVLAKKKHKRNKTKNSSSNLVYSCLKSAFPILSWGRQYKLNLFKKDLMAGLTLASLCIPQSIGYANLAGLDPEYGLYTSVVPPLIYSTMGTSRELAIGPVAVVSLLLSSMVRDLQDPVTDPIAYRKIVFTVTFFAGAFQAIFGLFRLGFLVDFLSHAALVGFMAGAAIVIGLQQLKGLFGLTHFTNKTDVVSVLSSVFHSLHHPWQPLNFVIGSSFLIFILLARFIGKRNNKLFWIPAMAPLISVVLATLIVYLSNAESRGVKIVKHIKPGFNQLSVNQLQFKSPHLGQIAKIGLISAIIALTEAIAVGRSFATIKGYRLDGNKEMMAMGFMNIAGSLSSCYVATGSFSRTAVNFSAGCETVVSNIVMAITVMISLEVLTRFLYFTPTAILASIILSALPGLIDVSGALHIWKLDKLDFLVLIAAFFGVLFASVEIGLLLAVGISFARIMLSSIRPSIEALGRLSKTDIFGDINQYPMANKTAGLLTLRISSPLLCFANANFIRDRILNSVQEIEGEENEQEVLKENGLQVVILDMSCVMGVDTSGVFALEELHQELASNDIRLVIASPRWRVLHKLKRAKLDEKIKTENIYMTVGEAVDIYVRARSTSHELC.

The Cytoplasmic segment spans residues 1–110 (MQLSSLSHTS…QYKLNLFKKD (110 aa)). A helical membrane pass occupies residues 111-131 (LMAGLTLASLCIPQSIGYANL). Residues 132–133 (AG) are Extracellular-facing. A helical transmembrane segment spans residues 134-154 (LDPEYGLYTSVVPPLIYSTMG). The Cytoplasmic portion of the chain corresponds to 155 to 158 (TSRE). Residues 159–179 (LAIGPVAVVSLLLSSMVRDLQ) form a helical membrane-spanning segment. The Extracellular portion of the chain corresponds to 180–190 (DPVTDPIAYRK). The chain crosses the membrane as a helical span at residues 191–211 (IVFTVTFFAGAFQAIFGLFRL). The Cytoplasmic segment spans residues 212-213 (GF). A helical transmembrane segment spans residues 214–234 (LVDFLSHAALVGFMAGAAIVI). Over 235–270 (GLQQLKGLFGLTHFTNKTDVVSVLSSVFHSLHHPWQ) the chain is Extracellular. A glycan (N-linked (GlcNAc...) asparagine) is linked at Asn250. The chain crosses the membrane as a helical span at residues 271 to 291 (PLNFVIGSSFLIFILLARFIG). Residues 292–296 (KRNNK) lie on the Cytoplasmic side of the membrane. The helical transmembrane segment at 297 to 317 (LFWIPAMAPLISVVLATLIVY) threads the bilayer. Residues 318 to 352 (LSNAESRGVKIVKHIKPGFNQLSVNQLQFKSPHLG) are Extracellular-facing. The helical transmembrane segment at 353–373 (QIAKIGLISAIIALTEAIAVG) threads the bilayer. Topologically, residues 374-389 (RSFATIKGYRLDGNKE) are cytoplasmic. The chain crosses the membrane as a helical span at residues 390–410 (MMAMGFMNIAGSLSSCYVATG). The Extracellular portion of the chain corresponds to 411–422 (SFSRTAVNFSAG). N-linked (GlcNAc...) asparagine glycosylation occurs at Asn418. The helical transmembrane segment at 423–443 (CETVVSNIVMAITVMISLEVL) threads the bilayer. Residues 444–446 (TRF) lie on the Cytoplasmic side of the membrane. A helical membrane pass occupies residues 447 to 467 (LYFTPTAILASIILSALPGLI). Residues 468-482 (DVSGALHIWKLDKLD) lie on the Extracellular side of the membrane. Residues 483-503 (FLVLIAAFFGVLFASVEIGLL) form a helical membrane-spanning segment. The Cytoplasmic segment spans residues 504 to 677 (LAVGISFARI…RARSTSHELC (174 aa)). An STAS domain is found at 540 to 666 (YPMANKTAGL…MTVGEAVDIY (127 aa)).

Belongs to the SLC26A/SulP transporter (TC 2.A.53) family. As to expression, expressed in the phloem in roots and in the phloem of vascular bundles in leaves.

The protein resides in the membrane. Functionally, low-affinity H(+)/sulfate cotransporter that may be involved in the distribution of sulfate from vascular bundles to the palisade cells of the leaves. Plays a central role in the regulation of sulfate assimilation. The protein is Sulfate transporter 2.2 (SULTR2;2) of Arabidopsis thaliana (Mouse-ear cress).